Consider the following 504-residue polypeptide: Chorion-specific transcription factor GCMb (504 aa).

The segment at residues 19–174 (LTWDINDPQM…KSETEGRRSA (156 aa)) is a DNA-binding region (GCM). The Zn(2+) site is built by cysteine 81, cysteine 87, cysteine 91, cysteine 118, cysteine 121, cysteine 130, histidine 157, and histidine 159. 2 stretches are compositionally biased toward basic and acidic residues: residues 155–172 (GVHDHPRPESKSETEGRR) and 188–203 (RRSEEPEARSTQDIRG). The tract at residues 155 to 203 (GVHDHPRPESKSETEGRRSALKRQMASFYQPQKRRSEEPEARSTQDIRG) is disordered. A C-terminal conserved inhibitory domain (CCID) region spans residues 379-393 (LQTVITTTVAYQAYQ). The segment at 438-472 (ASPSGRAPLKVPGDCQAPRPTLDFPQEADPSGTDG) is disordered.

Its subcellular location is the nucleus. In terms of biological role, transcription factor that binds specific sequences on gene promoters and activate their transcription. Through the regulation of gene transcription, may play a role in parathyroid gland development. This is Chorion-specific transcription factor GCMb from Mus musculus (Mouse).